The primary structure comprises 83 residues: Apolipoprotein C-I (83 aa).

A signal peptide spans 1-26 (MRLFLSLPVLVVVLSIVLEGPAPAQG).

It belongs to the apolipoprotein C1 family. As to expression, synthesized mainly in liver and to a minor degree in intestine. Also found in the lung and spleen.

The protein localises to the secreted. In terms of biological role, inhibitor of lipoprotein binding to the low density lipoprotein (LDL) receptor, LDL receptor-related protein, and very low density lipoprotein (VLDL) receptor. Associates with high density lipoproteins (HDL) and the triacylglycerol-rich lipoproteins in the plasma and makes up about 10% of the protein of the VLDL and 2% of that of HDL. Appears to interfere directly with fatty acid uptake and is also the major plasma inhibitor of cholesteryl ester transfer protein (CETP). Binds free fatty acids and reduces their intracellular esterification. Modulates the interaction of APOE with beta-migrating VLDL and inhibits binding of beta-VLDL to the LDL receptor-related protein. The polypeptide is Apolipoprotein C-I (APOC1) (Homo sapiens (Human)).